The following is a 290-amino-acid chain: MVIQKEKKSCGQVVEEWKEFVWNPRTHQFMGRTGTSWAFILLFYLVFYGFLTAMFTLTMWVMLQTVSDHTPKYQDRLATPGLMIRPKTENLDVIVNVSDTESWDQHVQKLNKFLEPYNDSIQAQKNDVCRPGRYYEQPDNGVLNYPKRACQFNRTQLGDCSGIGDPTHYGYSTGQPCVFIKMNRVISFYAGANQSMNVTCVGKRDEDAENLGNFVMFPANGNIDLIYFPYYGKKFHVNYTQPLVAVKFLNVTPNVEVNVECRINAANIATDDERDKFAPRVAFKLRINKT.

Residues 1 to 39 (MVIQKEKKSCGQVVEEWKEFVWNPRTHQFMGRTGTSWAF) lie on the Cytoplasmic side of the membrane. The chain crosses the membrane as a helical; Signal-anchor for type II membrane protein span at residues 40 to 67 (ILLFYLVFYGFLTAMFTLTMWVMLQTVS). Over 68 to 290 (DHTPKYQDRL…VAFKLRINKT (223 aa)) the chain is Extracellular. Asn96 and Asn118 each carry an N-linked (GlcNAc...) asparagine glycan. Cys129 and Cys150 form a disulfide bridge. A glycan (N-linked (GlcNAc...) asparagine) is linked at Asn153. An intrachain disulfide couples Cys160 to Cys177. N-linked (GlcNAc...) asparagine glycosylation is found at Asn193, Asn197, and Asn238. Residues 193-289 (NQSMNVTCVG…RVAFKLRINK (97 aa)) form an immunoglobulin-like region. Cys200 and Cys261 form a disulfide bridge.

Belongs to the X(+)/potassium ATPases subunit beta family. In terms of assembly, the sodium/potassium-transporting ATPase is composed of a catalytic alpha subunit, an auxiliary non-catalytic beta subunit and an additional regulatory subunit. Interacts with BSG.

The protein resides in the cell membrane. In terms of biological role, this is the non-catalytic component of the active enzyme, which catalyzes the hydrolysis of ATP coupled with the exchange of Na(+) and K(+) ions across the plasma membrane. The exact function of the beta-2 subunit is not known. Its function is as follows. Mediates cell adhesion of neurons and astrocytes, and promotes neurite outgrowth. This is Sodium/potassium-transporting ATPase subunit beta-2 (ATP1B2) from Bos taurus (Bovine).